Here is a 143-residue protein sequence, read N- to C-terminus: MKGIIVSDGVYREEDVFAGQRIFMTPELIEKTMLGLVQKYNQYRPTTKSSPYAVAAWLLHAFVSIHPFIDGNGRMGRILANLVLFSYGFPFPVPISADNDEYIKSLRLADRYYEKGRDTSHLALIILNSSHSIYKNYLSNLEL.

The region spanning 1 to 128 is the Fido domain; sequence MKGIIVSDGV…TSHLALIILN (128 aa). A helical membrane pass occupies residues 49 to 69; that stretch reads SSPYAVAAWLLHAFVSIHPFI.

It is found in the membrane. The protein is Fido domain-containing protein DDB_G0283145 of Dictyostelium discoideum (Social amoeba).